The primary structure comprises 258 residues: UPF0246 protein CKO_03380 (258 aa).

It belongs to the UPF0246 family.

This chain is UPF0246 protein CKO_03380, found in Citrobacter koseri (strain ATCC BAA-895 / CDC 4225-83 / SGSC4696).